Consider the following 2381-residue polypeptide: Highly reducing polyketide synthase virA (2381 aa).

The 420-residue stretch at 1–420 (MDALHLACHL…GANGHVILES (420 aa)) folds into the Ketosynthase family 3 (KS3) domain. Active-site for beta-ketoacyl synthase activity residues include C171, H306, and H344. The tract at residues 535–851 (VFTGQGAQYA…PYSPTLVRKE (317 aa)) is malonyl-CoA:ACP transacylase (MAT) domain. S629 (for malonyltransferase activity) is an active-site residue. The interval 920–1064 (HELLGTRATA…GSIRVMESTL (145 aa)) is N-terminal hotdog fold. The interval 920–1232 (HELLGTRATA…HLRMNEYTGK (313 aa)) is dehydratase (DH) domain. A PKS/mFAS DH domain is found at 920–1235 (HELLGTRATA…MNEYTGKAPV (316 aa)). The active-site Proton acceptor; for dehydratase activity is the H952. Residues 1078–1235 (HEVWGMSRWY…MNEYTGKAPV (158 aa)) are C-terminal hotdog fold. D1144 (proton donor; for dehydratase activity) is an active-site residue. Positions 1639–1956 (GMTDTIHFQQ…NKDRVGKVVV (318 aa)) are enoyl reductase (ER) domain. Residues 1981 to 2159 (TYLLVGCLGG…AVSVGLGMIS (179 aa)) are ketoreductase (KR) domain. The region spanning 2297–2375 (TMLDAILRLT…TLAEFIEEKL (79 aa)) is the Carrier domain. Position 2334 is an O-(pantetheine 4'-phosphoryl)serine (S2334).

It participates in secondary metabolite biosynthesis. Functionally, highly reducing polyketide synthase; part of the gene cluster that mediates the biosynthesis of virensols and trichoxide, fungal natural products that contain or are derived from a salicylaldehyde core. The pathway begins with the synthesis of the reduced chain in virensol C by the highly reducing polyketide synthase virA via condensation of one acetate and 8 malonate units. VirA has interesting programming rules since the first 2 ketides are fully reduced, the 3 following ketides undergo beta-dehydration, and the last 3 ketides are only reduced to beta-hydroxys to yield the trihydroxy portion. The production of aldehyde virensol C by virA alone is surprising, since virA does not contain a reductase (R) domain that is typically associated with reductive product release in HRPKS. The cupin-domain enzyme virC is involved in enhancing virA product turnover. The short-chain dehydrogenase virB then oxidizes the C-7 alcohol of virensol C to a ketone, yielding virensol D. Virensol D is further transformed to salicylaldehyde 5-deoxyaurocitrin by the short-chain dehydrogenase virD. VirD catalyzes the dehydrogenation of C-3 to form the beta-ketone aldehyde, which is followed by the generation of the nucleophilic C-2 that is required for the intramolecular aldol condensation between C-2 and C-7, itself followed by dehydration and aromatization which leads to salicylaldehyde 5-deoxyaurocitrin. While the dehydrogenation of virensol D is definitely catalyzed by virD, the aldol condensation and dehydration may be uncatalyzed or assisted by virD. The short chain dehydrogenase virG then converts salicylaldehyde 5-deoxyaurocitrin into virensol B which is further hydroxylated by the cytochrome P450 monooxygenase virE to yield the hydroquinone virensol A. VirI then may oxidize virensol A to form the quinone, while virH performs the epoxidation. Finally, the two remaining short-chain dehydrogenases, virK and virL, are probably responsible for reducing the ketones to the corresponding alcohols to furnish the epoxycyclohexanol structure in trichoxide. This Hypocrea virens (strain Gv29-8 / FGSC 10586) (Gliocladium virens) protein is Highly reducing polyketide synthase virA.